We begin with the raw amino-acid sequence, 326 residues long: DNA-binding death effector domain-containing protein 2 (326 aa).

In terms of domain architecture, DED spans Ser-25–Arg-104. A Nuclear localization signal motif is present at residues Arg-104 to Pro-109. A disordered region spans residues Arg-104 to Val-194. A compositionally biased stretch (low complexity) spans Ser-136–Gln-146. Positions Lys-155–Arg-173 match the Bipartite nuclear localization signal motif. A compositionally biased stretch (basic residues) spans Lys-155–Gly-174. Low complexity predominate over residues Ala-175 to Glu-191.

As to quaternary structure, interacts with CASP8, CASP10 and GTF3C3. Homodimerizes and heterodimerizes with DEDD. In terms of tissue distribution, expressed in most tissues. High levels were found in liver, kidney, heart, ovary, spleen, testes, skeletal muscle and peripheral blood leukocytes. Expression was absent or low in colon and small intestine. Expression is relatively high in the tumor cell lines chronic myologenous leukemia K-562 and the colorectal adenocarcinoma SW480. Expression is moderate in the cervical carcinoma HeLa, the Burkitt's lymphoma Raji, the lung carcinoma A-549, and the melanoma G-361. In contrast, two leukemia cell lines, HL-60 (promyelocytic leukemia) and MOLT-4 (lymphoblastic leukemia), show relatively low levels.

The protein localises to the nucleus. The protein resides in the nucleolus. Functionally, may play a critical role in death receptor-induced apoptosis and may target CASP8 and CASP10 to the nucleus. May regulate degradation of intermediate filaments during apoptosis. May play a role in the general transcription machinery in the nucleus and might be an important regulator of the activity of GTF3C3. The polypeptide is DNA-binding death effector domain-containing protein 2 (DEDD2) (Homo sapiens (Human)).